The sequence spans 324 residues: Beta-ketoacyl-[acyl-carrier-protein] synthase III (324 aa).

Catalysis depends on residues cysteine 113 and histidine 251. An ACP-binding region spans residues glutamine 252–arginine 256. Asparagine 281 is a catalytic residue.

The protein belongs to the thiolase-like superfamily. FabH family. Homodimer.

The protein resides in the cytoplasm. It carries out the reaction malonyl-[ACP] + acetyl-CoA + H(+) = 3-oxobutanoyl-[ACP] + CO2 + CoA. Its pathway is lipid metabolism; fatty acid biosynthesis. Catalyzes the condensation reaction of fatty acid synthesis by the addition to an acyl acceptor of two carbons from malonyl-ACP. Catalyzes the first condensation reaction which initiates fatty acid synthesis and may therefore play a role in governing the total rate of fatty acid production. Possesses both acetoacetyl-ACP synthase and acetyl transacylase activities. Its substrate specificity determines the biosynthesis of branched-chain and/or straight-chain of fatty acids. In Bartonella tribocorum (strain CIP 105476 / IBS 506), this protein is Beta-ketoacyl-[acyl-carrier-protein] synthase III.